We begin with the raw amino-acid sequence, 281 residues long: Bifunctional protein FolD (281 aa).

NADP(+)-binding positions include 159–161 (NRS), Ser184, and Ile225.

It belongs to the tetrahydrofolate dehydrogenase/cyclohydrolase family. Homodimer.

The catalysed reaction is (6R)-5,10-methylene-5,6,7,8-tetrahydrofolate + NADP(+) = (6R)-5,10-methenyltetrahydrofolate + NADPH. It catalyses the reaction (6R)-5,10-methenyltetrahydrofolate + H2O = (6R)-10-formyltetrahydrofolate + H(+). The protein operates within one-carbon metabolism; tetrahydrofolate interconversion. In terms of biological role, catalyzes the oxidation of 5,10-methylenetetrahydrofolate to 5,10-methenyltetrahydrofolate and then the hydrolysis of 5,10-methenyltetrahydrofolate to 10-formyltetrahydrofolate. This chain is Bifunctional protein FolD, found in Thermoplasma volcanium (strain ATCC 51530 / DSM 4299 / JCM 9571 / NBRC 15438 / GSS1).